Reading from the N-terminus, the 287-residue chain is F-actin-capping protein subunit beta (287 aa).

N-acetylserine is present on S2. Residues S85 and S92 each carry the phosphoserine modification.

The protein belongs to the F-actin-capping protein beta subunit family. In terms of assembly, component of the F-actin capping complex, composed of a heterodimer of an alpha and a beta subunit. Interacts with BSP1 (via C-terminus); leading to recruitment of the F-actin capping complex to actin cortical patches and the acomyosin contractile ring.

The protein localises to the cytoplasm. Its subcellular location is the cytoskeleton. It localises to the actin patch. It is found in the bud. The protein resides in the bud tip. Functionally, F-actin-capping proteins bind in a Ca(2+)-independent manner to the fast growing ends of actin filaments (barbed end) thereby blocking the exchange of subunits at these ends. Unlike other capping proteins (such as gelsolin and severin), these proteins do not sever actin filaments. The chain is F-actin-capping protein subunit beta (CAP2) from Saccharomyces cerevisiae (strain ATCC 204508 / S288c) (Baker's yeast).